The sequence spans 64 residues: Large ribosomal subunit protein bL35 (64 aa).

The segment covering 1–14 (MKQKTHKGAAKRIK) has biased composition (basic residues). The disordered stretch occupies residues 1–50 (MKQKTHKGAAKRIKISGSGKLRREQANRRHLLEGKPSKRTRRLKGTEDVA). The segment covering 21–36 (LRREQANRRHLLEGKP) has biased composition (basic and acidic residues).

It belongs to the bacterial ribosomal protein bL35 family.

In Corynebacterium jeikeium (strain K411), this protein is Large ribosomal subunit protein bL35.